The following is a 1526-amino-acid chain: DNA topoisomerase 2-alpha (1526 aa).

At Met-1 the chain carries N-acetylmethionine. Ser-4 carries the post-translational modification Phosphoserine. Lys-17 is covalently cross-linked (Glycyl lysine isopeptide (Lys-Gly) (interchain with G-Cter in SUMO2)). ATP is bound by residues Asn-90, Asn-118, and 146–148 (SSN). Glycyl lysine isopeptide (Lys-Gly) (interchain with G-Cter in SUMO2) cross-links involve residues Lys-154 and Lys-155. 159-166 (GRNGYGAK) provides a ligand contact to ATP. A Phosphothreonine modification is found at Thr-280. Residues 340-342 (KKK) are interaction with DNA. Residue Lys-350 forms a Glycyl lysine isopeptide (Lys-Gly) (interchain with G-Cter in SUMO2) linkage. Residue 374–376 (QTK) coordinates ATP. Residues Lys-384, Lys-395, Lys-414, Lys-416, Lys-423, and Lys-438 each participate in a glycyl lysine isopeptide (Lys-Gly) (interchain with G-Cter in SUMO2) cross-link. One can recognise a Toprim domain in the interval 453 to 570 (CTLILTEGDS…SLLRHRFLEE (118 aa)). Residue Glu-459 coordinates Mg(2+). Residues Lys-464, Lys-478, and Lys-527 each participate in a glycyl lysine isopeptide (Lys-Gly) (interchain with G-Cter in SUMO2) cross-link. Mg(2+)-binding residues include Asp-539 and Asp-541. Glycyl lysine isopeptide (Lys-Gly) (interchain with G-Cter in SUMO2) cross-links involve residues Lys-582, Lys-597, Lys-612, Lys-620, Lys-623, Lys-630, Lys-637, Lys-653, Lys-660, and Lys-674. One can recognise a Topo IIA-type catalytic domain in the interval 713–1168 (IPSMVDGLKP…TPSDLWKEDL (456 aa)). Tyr-803 (O-(5'-phospho-DNA)-tyrosine intermediate) is an active-site residue. The segment at 988–997 (KLQTSLTCNS) is interaction with DNA. Lys-1073 is covalently cross-linked (Glycyl lysine isopeptide (Lys-Gly) (interchain with G-Cter in SUMO2)). Over residues 1087–1096 (AWKEAQQKVP) the composition is skewed to basic and acidic residues. The segment at 1087–1120 (AWKEAQQKVPEEEENEENEESESESTSPAAESGP) is disordered. A compositionally biased stretch (acidic residues) spans 1097–1109 (EEEENEENEESES). Residues Lys-1193 and Lys-1201 each participate in a glycyl lysine isopeptide (Lys-Gly) (interchain with G-Cter in SUMO2) cross-link. The residue at position 1210 (Ser-1210) is a Phosphoserine. The interval 1229–1526 (EKKIRRKIKS…YLEESDDDLF (298 aa)) is disordered. Residue Lys-1237 forms a Glycyl lysine isopeptide (Lys-Gly) (interchain with G-Cter in SUMO1); alternate linkage. Residue Lys-1237 forms a Glycyl lysine isopeptide (Lys-Gly) (interchain with G-Cter in SUMO2); alternate linkage. Phosphothreonine is present on Thr-1244. A compositionally biased stretch (basic and acidic residues) spans 1254–1268 (LRQRLEKRQKREPGT). Glycyl lysine isopeptide (Lys-Gly) (interchain with G-Cter in SUMO2) cross-links involve residues Lys-1272, Lys-1279, and Lys-1282. Phosphoserine is present on residues Ser-1291, Ser-1293, Ser-1295, and Ser-1298. Thr-1323 is modified (phosphothreonine). The span at 1326 to 1346 (LDSDDDFSGLDEKDEDEDFFP) shows a compositional bias: acidic residues. Phosphoserine is present on residues Ser-1328 and Ser-1333. Phosphothreonine is present on Thr-1350. Glycyl lysine isopeptide (Lys-Gly) (interchain with G-Cter in SUMO2) cross-links involve residues Lys-1359, Lys-1363, and Lys-1369. 2 positions are modified to phosphoserine: Ser-1370 and Ser-1373. Lys-1381 participates in a covalent cross-link: Glycyl lysine isopeptide (Lys-Gly) (interchain with G-Cter in SUMO2). Phosphoserine is present on residues Ser-1383 and Ser-1387. Polar residues predominate over residues 1417–1427 (TKGQSLTSTAG). A Glycyl lysine isopeptide (Lys-Gly) (interchain with G-Cter in SUMO2); alternate cross-link involves residue Lys-1418. Lys-1418 bears the N6-acetyllysine; alternate mark. Residues 1429 to 1435 (KKRAVPK) form an interaction with PLSCR1 region. Lys-1438 participates in a covalent cross-link: Glycyl lysine isopeptide (Lys-Gly) (interchain with G-Cter in SUMO2); alternate. At Lys-1438 the chain carries N6-acetyllysine; alternate. Glycyl lysine isopeptide (Lys-Gly) (interchain with G-Cter in SUMO2) cross-links involve residues Lys-1450 and Lys-1455. Phosphoserine is present on residues Ser-1465, Ser-1467, Ser-1470, and Ser-1472. Residues Lys-1480 and Lys-1488 each participate in a glycyl lysine isopeptide (Lys-Gly) (interchain with G-Cter in SUMO2) cross-link. The segment covering 1487–1498 (LKGEERDFHVDL) has biased composition (basic and acidic residues). Position 1521 is a phosphoserine (Ser-1521).

Belongs to the type II topoisomerase family. In terms of assembly, homodimer. Interacts with COPS5. Interacts with RECQL5; this stimulates DNA decatenation. Interacts with SETMAR; stimulates the topoisomerase activity. Interacts with DHX9; this interaction occurs in a E2 enzyme UBE2I- and RNA-dependent manner, negatively regulates DHX9-mediated double-stranded DNA and RNA duplex helicase activity and stimulates TOP2A-mediated supercoiled DNA relaxation activity. Interacts with HNRNPU (via C-terminus); this interaction protects the topoisomerase TOP2A from degradation and positively regulates the relaxation of supercoiled DNA in a RNA-dependent manner. Interacts with MCM3AP. Interacts with ERCC6. Interacts with PLSCR1. Interacts with GCNA; this interaction allows the resolution of topoisomerase II (TOP2A) DNA-protein cross-links. Interacts with POL1RA/RPA1 (via dock II) and UBTF in the context of Pol I complex; may assist Pol I transcription initiation by releasing supercoils occurring during DNA unwinding. Interacts with TPRN; TPRN interacts with a number of DNA damage response proteins, is recruited to sites of DNA damage and may play a role in DNA damage repair. Mg(2+) serves as cofactor. Requires Mn(2+) as cofactor. The cofactor is Ca(2+). In terms of processing, phosphorylation has no effect on catalytic activity.

It is found in the cytoplasm. Its subcellular location is the nucleus. The protein resides in the nucleoplasm. It localises to the nucleolus. The enzyme catalyses ATP-dependent breakage, passage and rejoining of double-stranded DNA.. Key decatenating enzyme that alters DNA topology by binding to two double-stranded DNA molecules, generating a double-stranded break in one of the strands, passing the intact strand through the broken strand, and religating the broken strand. May play a role in regulating the period length of BMAL1 transcriptional oscillation. In Rattus norvegicus (Rat), this protein is DNA topoisomerase 2-alpha (Top2a).